The sequence spans 213 residues: Adenylyl-sulfate kinase (213 aa).

The span at 1–17 (MPAHQLDDHNQETRSDD) shows a compositional bias: basic and acidic residues. Residues 1–20 (MPAHQLDDHNQETRSDDENI) form a disordered region. Residue 47-54 (GLSGSGKS) participates in ATP binding. Serine 121 (phosphoserine intermediate) is an active-site residue.

Belongs to the APS kinase family.

It catalyses the reaction adenosine 5'-phosphosulfate + ATP = 3'-phosphoadenylyl sulfate + ADP + H(+). The protein operates within sulfur metabolism; hydrogen sulfide biosynthesis; sulfite from sulfate: step 2/3. Functionally, catalyzes the synthesis of activated sulfate. The sequence is that of Adenylyl-sulfate kinase from Yersinia pestis.